We begin with the raw amino-acid sequence, 953 residues long: UvrABC system protein A (953 aa).

33 to 40 (GLSGSGKS) serves as a coordination point for ATP. ABC transporter domains follow at residues 320–599 (WGST…EESI) and 619–949 (GHDN…RYLK). 652–659 (GVSGSGKS) lines the ATP pocket. Residues 752-778 (CEACQGDGLIKIEMHFLPDVYVKCDIC) form a C4-type zinc finger.

Belongs to the ABC transporter superfamily. UvrA family. Forms a heterotetramer with UvrB during the search for lesions.

Its subcellular location is the cytoplasm. In terms of biological role, the UvrABC repair system catalyzes the recognition and processing of DNA lesions. UvrA is an ATPase and a DNA-binding protein. A damage recognition complex composed of 2 UvrA and 2 UvrB subunits scans DNA for abnormalities. When the presence of a lesion has been verified by UvrB, the UvrA molecules dissociate. The polypeptide is UvrABC system protein A (Rickettsia prowazekii (strain Madrid E)).